The sequence spans 301 residues: Putative MgpC-like protein MPN_093 (301 aa).

Belongs to the MgpC family.

This chain is Putative MgpC-like protein MPN_093, found in Mycoplasma pneumoniae (strain ATCC 29342 / M129 / Subtype 1) (Mycoplasmoides pneumoniae).